The chain runs to 223 residues: Endonuclease V (223 aa).

Mg(2+) contacts are provided by D35 and D103.

Belongs to the endonuclease V family. Mg(2+) serves as cofactor.

It is found in the cytoplasm. The catalysed reaction is Endonucleolytic cleavage at apurinic or apyrimidinic sites to products with a 5'-phosphate.. DNA repair enzyme involved in the repair of deaminated bases. Selectively cleaves double-stranded DNA at the second phosphodiester bond 3' to a deoxyinosine leaving behind the intact lesion on the nicked DNA. The chain is Endonuclease V from Salmonella paratyphi A (strain ATCC 9150 / SARB42).